A 1321-amino-acid chain; its full sequence is Bile salt export pump (1321 aa).

Residues Met1–Met62 lie on the Cytoplasmic side of the membrane. The segment at Glu16–Glu37 is disordered. Residues Glu21–Glu37 are compositionally biased toward basic and acidic residues. The region spanning Met62–Thr385 is the ABC transmembrane type-1 1 domain. The helical transmembrane segment at Phe63–Phe83 threads the bilayer. Residues Gly84–Gly147 lie on the Extracellular side of the membrane. Asn109, Asn116, Asn122, and Asn125 each carry an N-linked (GlcNAc...) asparagine glycan. The helical transmembrane segment at Ile148–Ala168 threads the bilayer. Over Arg169 to Asp215 the chain is Cytoplasmic. Residues Gln216–Phe236 traverse the membrane as a helical segment. Residues Arg237–Lys240 lie on the Extracellular side of the membrane. The helical transmembrane segment at Leu241–Leu261 threads the bilayer. Topologically, residues Ser262–Gly319 are cytoplasmic. A helical membrane pass occupies residues Ile320–Ala340. Residues Phe341–Glu353 are Extracellular-facing. A helical membrane pass occupies residues Tyr354 to Gly374. The Cytoplasmic portion of the chain corresponds to Asn375–Met755. The region spanning Ile420–Leu656 is the ABC transporter 1 domain. An ATP-binding site is contributed by Gly455 to Ser462. A Phosphothreonine modification is found at Thr586. Ser587 carries the post-translational modification Phosphoserine. An interaction with HAX1 region spans residues Phe651–Ala672. Phosphoserine is present on residues Ser690, Ser701, and Ser704. Residues Met755–Lys1043 enclose the ABC transmembrane type-1 2 domain. A helical transmembrane segment spans residues Leu756–Phe776. At Ser777–Gln794 the chain is on the extracellular side. Residues Ile795 to Leu815 traverse the membrane as a helical segment. Residues Gln816–Gln869 lie on the Cytoplasmic side of the membrane. 2 consecutive transmembrane segments (helical) span residues Gly870–Met890 and Ile891–Leu911. Residues Ala912–Asn979 lie on the Cytoplasmic side of the membrane. A helical transmembrane segment spans residues Ile980–Tyr1000. Residues Arg1001–Gly1011 are Extracellular-facing. A helical membrane pass occupies residues Leu1012–Gly1032. At Arg1033–Ser1321 the chain is on the cytoplasmic side. The region spanning Ile1078–Thr1316 is the ABC transporter 2 domain. ATP is bound at residue Gly1113–Ser1120. At Ser1214 the chain carries Phosphoserine. The tract at residues Tyr1311–Val1314 is mediates internalization from the plasma membrane. Ser1321 is subject to Phosphoserine.

It belongs to the ABC transporter superfamily. ABCB family. Multidrug resistance exporter (TC 3.A.1.201) subfamily. As to quaternary structure, interacts with HAX1. Interacts with the adapter protein complex 2 (AP-2) throught AP2A2 or AP2A1; this interaction regulates cell membrane expression of ABCB11 through its internalization in a clathrin-dependent manner and its subsequent degradation. In terms of processing, N-glycosylated. Post-translationally, ubiquitinated; short-chain ubiquitination regulates cell-Surface expression of ABCB11. As to expression, expressed predominantly, if not exclusively in the liver, where it was further localized to the canalicular microvilli and to subcanalicular vesicles of the hepatocytes by in situ.

Its subcellular location is the apical cell membrane. It localises to the recycling endosome membrane. The protein resides in the endosome. It is found in the cell membrane. The catalysed reaction is cholate(in) + ATP + H2O = cholate(out) + ADP + phosphate + H(+). It carries out the reaction taurocholate(in) + ATP + H2O = taurocholate(out) + ADP + phosphate + H(+). The enzyme catalyses glycocholate(in) + ATP + H2O = glycocholate(out) + ADP + phosphate + H(+). It catalyses the reaction glycochenodeoxycholate(in) + ATP + H2O = glycochenodeoxycholate(out) + ADP + phosphate + H(+). The catalysed reaction is taurochenodeoxycholate(in) + ATP + H2O = taurochenodeoxycholate(out) + ADP + phosphate + H(+). It carries out the reaction glycoursodeoxycholate(in) + ATP + H2O = glycoursodeoxycholate(out) + ADP + phosphate + H(+). The enzyme catalyses tauroursodeoxycholate(in) + ATP + H2O = tauroursodeoxycholate(out) + ADP + phosphate + H(+). It catalyses the reaction taurodeoxycholate(in) + ATP + H2O = taurodeoxycholate(out) + ADP + phosphate + H(+). The catalysed reaction is taurolithocholate 3-sulfate(in) + ATP + H2O = taurolithocholate 3-sulfate(out) + ADP + phosphate + H(+). It carries out the reaction pravastatin(in) + ATP + H2O = pravastatin(out) + ADP + phosphate + H(+). With respect to regulation, the uptake of taurocholate is inhibited by taurolithocholate sulfate with an IC(50) of 9 uM. Pravastatin competitively inhibits the transport of taurocholic acid. Cyclosporin A, glibenclamide, rifampicin and troglitazonestrongly competitively inhibit the transport activity of taurocholate. The canalicular transport activity of taurocholate is strongly dependent on canalicular membrane cholesterol content. The uptake of taurocholate is increased by short- and medium-chain fatty acids. Cholesterol increases transport capacity of taurocholate without affecting the affinity for the substrate. Catalyzes the transport of the major hydrophobic bile salts, such as taurine and glycine-conjugated cholic acid across the canalicular membrane of hepatocytes in an ATP-dependent manner, therefore participates in hepatic bile acid homeostasis and consequently to lipid homeostasis through regulation of biliary lipid secretion in a bile salts dependent manner. Transports taurine-conjugated bile salts more rapidly than glycine-conjugated bile salts. Also transports non-bile acid compounds, such as pravastatin and fexofenadine in an ATP-dependent manner and may be involved in their biliary excretion. This is Bile salt export pump from Homo sapiens (Human).